The primary structure comprises 313 residues: MLLLADMDVVNQLVAGGQFRVVKEPLGFVKVLQWVFAIFAFATCGSYSGELQLSVDCANKTKSDLNIEVEFEYPFRLHEVYFEAPTCQGDPKKIFLVGNYSSSAEFFVTVAVFAFLYSMGALATYIFLQNKYRENNKGPMLDFLATAVFAFMWLVSSSAWAKGLSDVKMATDPENIIKGMHVCHQPGNTCKELRDPVTSGLNTSVVFGFLNLVLWVGNLWFVFKETGWAAPFLRAPPGAPEKQPAPGDAYGQAGYGQGPGGYGPQDSYGPQGGYQPDYGQPASSGGGGYGPQGDYGQQGYGPQGAPTSFSNQM.

At 1-25 (MLLLADMDVVNQLVAGGQFRVVKEP) the chain is on the cytoplasmic side. Positions 21 to 227 (VVKEPLGFVK…NLWFVFKETG (207 aa)) constitute an MARVEL domain. Residues 26–49 (LGFVKVLQWVFAIFAFATCGSYSG) traverse the membrane as a helical segment. At 50–106 (ELQLSVDCANKTKSDLNIEVEFEYPFRLHEVYFEAPTCQGDPKKIFLVGNYSSSAEF) the chain is on the vesicular side. N59 carries an N-linked (GlcNAc...) asparagine glycan. Phosphotyrosine is present on Y81. N-linked (GlcNAc...) asparagine glycosylation is present at N99. Residues 107–130 (FVTVAVFAFLYSMGALATYIFLQN) form a helical membrane-spanning segment. Residues 131–137 (KYRENNK) are Cytoplasmic-facing. A helical membrane pass occupies residues 138–161 (GPMLDFLATAVFAFMWLVSSSAWA). The Vesicular segment spans residues 162 to 199 (KGLSDVKMATDPENIIKGMHVCHQPGNTCKELRDPVTS). Residues 200–223 (GLNTSVVFGFLNLVLWVGNLWFVF) traverse the membrane as a helical segment. The Cytoplasmic portion of the chain corresponds to 224-313 (KETGWAAPFL…GAPTSFSNQM (90 aa)). Residues 238-313 (GAPEKQPAPG…GAPTSFSNQM (76 aa)) form a disordered region. The span at 253-263 (AGYGQGPGGYG) shows a compositional bias: gly residues. The interval 254–304 (GYGQGPGGYGPQDSYGPQGGYQPDYGQPASSGGGGYGPQGDYGQQGYGPQG) is repeats, Gly/Tyr-rich. The segment covering 264–283 (PQDSYGPQGGYQPDYGQPAS) has biased composition (low complexity). The segment covering 284 to 302 (SGGGGYGPQGDYGQQGYGP) has biased composition (gly residues).

Belongs to the synaptophysin/synaptobrevin family. Homohexamer or homotetramer. Interacts with SRCIN1. Interacts with VAMP2; the interaction is inhibited by interaction of VAPM2 with SEPT8. Ubiquitinated; mediated by SIAH1 or SIAH2 and leading to its subsequent proteasomal degradation. Post-translationally, phosphorylated by SRC. Characteristic of a type of small (30-80 nm) neurosecretory vesicles, including presynaptic vesicles, but also vesicles of various neuroendocrine cells of both neuronal and epithelial phenotype.

The protein resides in the cytoplasmic vesicle. The protein localises to the secretory vesicle. It is found in the synaptic vesicle membrane. It localises to the synapse. Its subcellular location is the synaptosome. Possibly involved in structural functions as organizing other membrane components or in targeting the vesicles to the plasma membrane. Involved in the regulation of short-term and long-term synaptic plasticity. The chain is Synaptophysin (SYP) from Bos taurus (Bovine).